We begin with the raw amino-acid sequence, 320 residues long: Acetaldehyde dehydrogenase 2 (320 aa).

Residue cysteine 129 is the Acyl-thioester intermediate of the active site. NAD(+) contacts are provided by residues 160–168 (SAGPGTRAN) and asparagine 287.

The protein belongs to the acetaldehyde dehydrogenase family.

It carries out the reaction acetaldehyde + NAD(+) + CoA = acetyl-CoA + NADH + H(+). This Burkholderia cenocepacia (strain ATCC BAA-245 / DSM 16553 / LMG 16656 / NCTC 13227 / J2315 / CF5610) (Burkholderia cepacia (strain J2315)) protein is Acetaldehyde dehydrogenase 2.